The primary structure comprises 195 residues: Imidazoleglycerol-phosphate dehydratase (195 aa).

This sequence belongs to the imidazoleglycerol-phosphate dehydratase family.

The protein localises to the cytoplasm. The enzyme catalyses D-erythro-1-(imidazol-4-yl)glycerol 3-phosphate = 3-(imidazol-4-yl)-2-oxopropyl phosphate + H2O. Its pathway is amino-acid biosynthesis; L-histidine biosynthesis; L-histidine from 5-phospho-alpha-D-ribose 1-diphosphate: step 6/9. The polypeptide is Imidazoleglycerol-phosphate dehydratase (Cereibacter sphaeroides (strain ATCC 17025 / ATH 2.4.3) (Rhodobacter sphaeroides)).